Here is a 224-residue protein sequence, read N- to C-terminus: PKHD-type hydroxylase Shewana3_0717 (224 aa).

A Fe2OG dioxygenase domain is found at 78-176 (QFYPPLFNRY…RTAAFMWLQS (99 aa)). 3 residues coordinate Fe cation: His-96, Asp-98, and His-157. Position 167 (Arg-167) interacts with 2-oxoglutarate.

The cofactor is Fe(2+). It depends on L-ascorbate as a cofactor.

The chain is PKHD-type hydroxylase Shewana3_0717 from Shewanella sp. (strain ANA-3).